The primary structure comprises 165 residues: Crossover junction endodeoxyribonuclease RuvC (165 aa).

Catalysis depends on residues D7, E67, and D140. Residues D7, E67, and D140 each contribute to the Mg(2+) site.

Belongs to the RuvC family. Homodimer which binds Holliday junction (HJ) DNA. The HJ becomes 2-fold symmetrical on binding to RuvC with unstacked arms; it has a different conformation from HJ DNA in complex with RuvA. In the full resolvosome a probable DNA-RuvA(4)-RuvB(12)-RuvC(2) complex forms which resolves the HJ. The cofactor is Mg(2+).

It is found in the cytoplasm. It carries out the reaction Endonucleolytic cleavage at a junction such as a reciprocal single-stranded crossover between two homologous DNA duplexes (Holliday junction).. In terms of biological role, the RuvA-RuvB-RuvC complex processes Holliday junction (HJ) DNA during genetic recombination and DNA repair. Endonuclease that resolves HJ intermediates. Cleaves cruciform DNA by making single-stranded nicks across the HJ at symmetrical positions within the homologous arms, yielding a 5'-phosphate and a 3'-hydroxyl group; requires a central core of homology in the junction. The consensus cleavage sequence is 5'-(A/T)TT(C/G)-3'. Cleavage occurs on the 3'-side of the TT dinucleotide at the point of strand exchange. HJ branch migration catalyzed by RuvA-RuvB allows RuvC to scan DNA until it finds its consensus sequence, where it cleaves and resolves the cruciform DNA. The polypeptide is Crossover junction endodeoxyribonuclease RuvC (Caldanaerobacter subterraneus subsp. tengcongensis (strain DSM 15242 / JCM 11007 / NBRC 100824 / MB4) (Thermoanaerobacter tengcongensis)).